The following is a 92-amino-acid chain: MARSLKKGPFADQSLLDKVAKQAKSNDKKVIQTWSRRSTIFPEFIGFTIAVYNGREHVPVYVTEDMVGHKLGEFAPTRTFRGHKKEDKKVKR.

Belongs to the universal ribosomal protein uS19 family.

Protein S19 forms a complex with S13 that binds strongly to the 16S ribosomal RNA. The polypeptide is Small ribosomal subunit protein uS19 (Acholeplasma laidlawii (strain PG-8A)).